The sequence spans 311 residues: Malate dehydrogenase (311 aa).

NAD(+) contacts are provided by residues 7-13 and aspartate 34; that span reads GAAGGIG. Substrate contacts are provided by arginine 81 and arginine 87. NAD(+)-binding positions include asparagine 94 and 117–119; that span reads ITN. Residues asparagine 119 and arginine 153 each contribute to the substrate site. The active-site Proton acceptor is histidine 177. Methionine 227 contributes to the NAD(+) binding site.

The protein belongs to the LDH/MDH superfamily. MDH type 1 family. In terms of assembly, homodimer.

The enzyme catalyses (S)-malate + NAD(+) = oxaloacetate + NADH + H(+). In terms of biological role, catalyzes the reversible oxidation of malate to oxaloacetate. The protein is Malate dehydrogenase of Erwinia tasmaniensis (strain DSM 17950 / CFBP 7177 / CIP 109463 / NCPPB 4357 / Et1/99).